A 654-amino-acid chain; its full sequence is APC membrane recruitment protein 2 (654 aa).

Disordered regions lie at residues 1–105, 224–289, 316–369, and 381–654; these read MEVQ…TAPL, ECGN…QSEQ, IIAD…PQVS, and PAHQ…QSRK. A compositionally biased stretch (pro residues) spans 9–18; the sequence is EPPPCDPQPP. The segment covering 60-70 has biased composition (basic and acidic residues); it reads ELVRSKTHDGL. Basic and acidic residues predominate over residues 427 to 454; sequence PQKDEDSPAPRRAEPVLHHAPARLEKRP. The segment covering 468–479 has biased composition (polar residues); it reads SGSSKTGKQQPS. Over residues 565 to 575 the composition is skewed to low complexity; sequence SPKCSSSATSS. The segment covering 576–586 has biased composition (polar residues); the sequence is FRSMKGSTSLP. A compositionally biased stretch (low complexity) spans 601–621; it reads SHSSSQGALSSNLSPTSTTPP. Residues 644-654 show a composition bias toward polar residues; the sequence is GKSTSTSQSRK.

It belongs to the Amer family.

It is found in the cell membrane. In terms of biological role, negative regulator of the canonical Wnt signaling pathway involved in neuroectodermal patterning. Acts by specifically binding phosphatidylinositol 4,5-bisphosphate (PtdIns(4,5)P2), translocating to the cell membrane and interacting with key regulators of the canonical Wnt signaling pathway, such as components of the beta-catenin destruction complex. This Danio rerio (Zebrafish) protein is APC membrane recruitment protein 2 (amer2).